The chain runs to 153 residues: Endoribonuclease YbeY (153 aa).

Histidine 114, histidine 118, and histidine 124 together coordinate Zn(2+).

Belongs to the endoribonuclease YbeY family. It depends on Zn(2+) as a cofactor.

The protein resides in the cytoplasm. Functionally, single strand-specific metallo-endoribonuclease involved in late-stage 70S ribosome quality control and in maturation of the 3' terminus of the 16S rRNA. The polypeptide is Endoribonuclease YbeY (Shewanella amazonensis (strain ATCC BAA-1098 / SB2B)).